Reading from the N-terminus, the 361-residue chain is Peptide chain release factor 1 (361 aa).

Glutamine 233 carries the post-translational modification N5-methylglutamine. Residues 282 to 310 are disordered; that stretch reads SKKQAERAQNRKSQVGSGDRSERIRTYNF.

This sequence belongs to the prokaryotic/mitochondrial release factor family. Post-translationally, methylated by PrmC. Methylation increases the termination efficiency of RF1.

It localises to the cytoplasm. Functionally, peptide chain release factor 1 directs the termination of translation in response to the peptide chain termination codons UAG and UAA. This chain is Peptide chain release factor 1, found in Treponema denticola (strain ATCC 35405 / DSM 14222 / CIP 103919 / JCM 8153 / KCTC 15104).